A 333-amino-acid chain; its full sequence is Lipoyl synthase (333 aa).

Over residues 1 to 15 the composition is skewed to polar residues; sequence MSTLVESPVPSNDSQ. The disordered stretch occupies residues 1-34; sequence MSTLVESPVPSNDSQAAAPAAYDPTQKQKSQAKT. Positions 80, 85, 91, 106, 110, 113, and 320 each coordinate [4Fe-4S] cluster. The Radical SAM core domain maps to 91–309; sequence CFGKGTATFM…EREAYAMGFT (219 aa).

This sequence belongs to the radical SAM superfamily. Lipoyl synthase family. It depends on [4Fe-4S] cluster as a cofactor.

It localises to the cytoplasm. The catalysed reaction is [[Fe-S] cluster scaffold protein carrying a second [4Fe-4S](2+) cluster] + N(6)-octanoyl-L-lysyl-[protein] + 2 oxidized [2Fe-2S]-[ferredoxin] + 2 S-adenosyl-L-methionine + 4 H(+) = [[Fe-S] cluster scaffold protein] + N(6)-[(R)-dihydrolipoyl]-L-lysyl-[protein] + 4 Fe(3+) + 2 hydrogen sulfide + 2 5'-deoxyadenosine + 2 L-methionine + 2 reduced [2Fe-2S]-[ferredoxin]. The protein operates within protein modification; protein lipoylation via endogenous pathway; protein N(6)-(lipoyl)lysine from octanoyl-[acyl-carrier-protein]: step 2/2. Functionally, catalyzes the radical-mediated insertion of two sulfur atoms into the C-6 and C-8 positions of the octanoyl moiety bound to the lipoyl domains of lipoate-dependent enzymes, thereby converting the octanoylated domains into lipoylated derivatives. The polypeptide is Lipoyl synthase (Bordetella parapertussis (strain 12822 / ATCC BAA-587 / NCTC 13253)).